Here is a 134-residue protein sequence, read N- to C-terminus: Methylglyoxal synthase (134 aa).

The MGS-like domain occupies 1 to 134 (MHIALIAHDE…DWRDLRRNDE (134 aa)). Substrate is bound by residues His8, Lys12, 34-37 (TGTT), and 54-55 (SG). Asp60 (proton donor/acceptor) is an active-site residue. His87 contacts substrate.

The protein belongs to the methylglyoxal synthase family.

The enzyme catalyses dihydroxyacetone phosphate = methylglyoxal + phosphate. Catalyzes the formation of methylglyoxal from dihydroxyacetone phosphate. The chain is Methylglyoxal synthase from Listeria monocytogenes serotype 4b (strain CLIP80459).